Reading from the N-terminus, the 367-residue chain is Isocitrate dehydrogenase [NAD] regulatory subunit 2, mitochondrial (367 aa).

The N-terminal 25 residues, 1–25, are a transit peptide targeting the mitochondrion; it reads MSRQSFSLLKNLRSIASGSKIQTRS.

It belongs to the isocitrate and isopropylmalate dehydrogenases family. As to quaternary structure, heterooligomer of catalytic and regulatory subunits. In terms of tissue distribution, ubiquitous. Predominantly expressed in roots, stems and leaves.

Its subcellular location is the mitochondrion. Performs an essential role in the oxidative function of the citric acid cycle. This Arabidopsis thaliana (Mouse-ear cress) protein is Isocitrate dehydrogenase [NAD] regulatory subunit 2, mitochondrial (IDH2).